The primary structure comprises 366 residues: Inositol 2-dehydrogenase (366 aa).

Belongs to the Gfo/Idh/MocA family. As to quaternary structure, homotetramer.

It catalyses the reaction myo-inositol + NAD(+) = scyllo-inosose + NADH + H(+). In terms of biological role, involved in the oxidation of myo-inositol (MI) to 2-keto-myo-inositol (2KMI or 2-inosose). This is Inositol 2-dehydrogenase from Rhodococcus jostii (strain RHA1).